Consider the following 205-residue polypeptide: Probable GTP-binding protein EngB (205 aa).

The region spanning 22 to 194 (ELPEIAFAGR…WESILDLCEI (173 aa)) is the EngB-type G domain. Residues 30-37 (GRSNVGKS), 57-61 (GRTQL), 75-78 (DLPG), 142-145 (TKAD), and 173-175 (FSA) contribute to the GTP site. Mg(2+) is bound by residues Ser-37 and Thr-59.

The protein belongs to the TRAFAC class TrmE-Era-EngA-EngB-Septin-like GTPase superfamily. EngB GTPase family. It depends on Mg(2+) as a cofactor.

Functionally, necessary for normal cell division and for the maintenance of normal septation. The sequence is that of Probable GTP-binding protein EngB from Desulfatibacillum aliphaticivorans.